Here is a 1109-residue protein sequence, read N- to C-terminus: Protein argonaute 3 (1109 aa).

Residues 1 to 13 (MAGRGGRDPRRGY) show a composition bias toward basic and acidic residues. 2 disordered regions span residues 1–83 (MAGR…GLVR) and 125–220 (DHRD…PLSK). 3 stretches are compositionally biased toward gly residues: residues 14-30 (DGGYGYPRGGGGQGGTN), 37-54 (RGGGRNGPRGGRFPGGRG), and 62-83 (DVLGGGQGGGRGTTAGAGGLVR). A compositionally biased stretch (basic and acidic residues) spans 125–134 (DHRDQHDHQS). Over residues 135–161 (QRHHHRHHHHQRQRHHHHHQRQQRRGS) the composition is skewed to basic residues. Residues 411–521 (SVLDLVKTMK…VPIEFCNIPE (111 aa)) form the PAZ domain. Residues 527–545 (VARLDDKKSDNKGEQEKPS) show a composition bias toward basic and acidic residues. A disordered region spans residues 527–548 (VARLDDKKSDNKGEQEKPSTKT). Residues 720-1023 (LLFCPMLNRC…AAYRGRLYYE (304 aa)) enclose the Piwi domain.

Belongs to the argonaute family. Ago subfamily.

Probably involved in the RNA silencing pathway. May bind to short RNAs such as microRNAs (miRNAs) or short interfering RNAs (siRNAs), and represses the translation of mRNAs which are complementary to them. In Oryza sativa subsp. japonica (Rice), this protein is Protein argonaute 3 (AGO3).